The sequence spans 157 residues: Large ribosomal subunit protein uL15 (157 aa).

Belongs to the universal ribosomal protein uL15 family. As to quaternary structure, part of the 50S ribosomal subunit.

Functionally, binds to the 23S rRNA. The polypeptide is Large ribosomal subunit protein uL15 (Ehrlichia ruminantium (strain Gardel)).